The following is a 255-amino-acid chain: Glutamate racemase (255 aa).

Substrate contacts are provided by residues 7 to 8 (DS) and 39 to 40 (YG). The active-site Proton donor/acceptor is the C70. 71-72 (NT) contacts substrate. Residue C181 is the Proton donor/acceptor of the active site. 182 to 183 (TH) is a substrate binding site.

The protein belongs to the aspartate/glutamate racemases family.

The enzyme catalyses L-glutamate = D-glutamate. Its pathway is cell wall biogenesis; peptidoglycan biosynthesis. In terms of biological role, provides the (R)-glutamate required for cell wall biosynthesis. The chain is Glutamate racemase from Helicobacter pylori (strain G27).